A 385-amino-acid chain; its full sequence is GPN-loop GTPase 1 (385 aa).

Residue 13-18 (GSGKTT) participates in GTP binding. The short motif at 70 to 72 (GPN) is the Gly-Pro-Asn (GPN)-loop; involved in dimer interface element. GTP is bound at residue 173 to 176 (NKTD). Phosphoserine is present on residues Ser304, Ser308, and Ser313. Acidic residues predominate over residues 317-332 (EDANDGLVDRDEDEGV). The tract at residues 317 to 356 (EDANDGLVDRDEDEGVEREYTFPGEERTKGEVNENSAPDL) is disordered. Basic and acidic residues predominate over residues 333-348 (EREYTFPGEERTKGEV). Residue Ser352 is modified to Phosphoserine. Lys369 is covalently cross-linked (Glycyl lysine isopeptide (Lys-Gly) (interchain with G-Cter in ubiquitin)).

Belongs to the GPN-loop GTPase family. In terms of assembly, heterodimers with GPN2 or GPN3. Binds to RNA polymerase II (RNAPII) in a GTP-dependent manner. Interacts with nuclear pore protein NUP133 and nuclear export factor CRM1. Interacts with PCL1. Post-translationally, phosphorylated by the cyclin-CDK PCL1-PHO85.

It is found in the cytoplasm. Functionally, small GTPase required for proper nuclear import of RNA polymerase II (RNAPII). May act at an RNAP assembly step prior to nuclear import. Promotes sister chromatid separation during anaphase. The sequence is that of GPN-loop GTPase 1 from Saccharomyces cerevisiae (strain ATCC 204508 / S288c) (Baker's yeast).